Here is a 295-residue protein sequence, read N- to C-terminus: Small ribosomal subunit protein uS2 (295 aa).

Ser2 is subject to N-acetylserine. Position 43 is a phosphoserine (Ser43). An N6-acetyllysine modification is found at Lys52. Positions 54–113 are interaction with PPP1R16B; that stretch reads TWEKLLLAARAIVAIENPADVSVISSRNTGQRAVLKFAAATGATPIAGRFTPGTFTNQIQ. Position 89 is an N6-acetyllysine; alternate (Lys89). Lys89 is covalently cross-linked (Glycyl lysine isopeptide (Lys-Gly) (interchain with G-Cter in SUMO2); alternate). At Thr97 the chain carries Phosphothreonine. Laminin-binding stretches follow at residues 161–180 and 205–229; these read IPCN…MLAR and RDPE…EFQG. [DE]-W-[ST] repeat units follow at residues 230-232, 247-249, 266-268, 275-277, and 293-295; these read EWT, DWS, and EWS. Residues 242 to 295 are laminin-binding; it reads QPEVADWSEGVQVPSVPIQQFPTEDWSAQPATEDWSAAPTAQATEWVGTTTEWS. The tract at residues 266 to 295 is disordered; sequence DWSAQPATEDWSAAPTAQATEWVGTTTEWS. Polar residues predominate over residues 280 to 295; that stretch reads PTAQATEWVGTTTEWS.

This sequence belongs to the universal ribosomal protein uS2 family. As to quaternary structure, monomer (37LRP) and homodimer (67LR). Component of the small ribosomal subunit. Mature ribosomes consist of a small (40S) and a large (60S) subunit. The 40S subunit contains about 33 different proteins and 1 molecule of RNA (18S). The 60S subunit contains about 49 different proteins and 3 molecules of RNA (28S, 5.8S and 5S). Interacts with RPS21. Interacts with several laminins including at least LAMB1. Interacts with MDK. The mature dimeric form interacts with PPP1R16B (via its fourth ankyrin repeat). Interacts with PPP1CA only in the presence of PPP1R16B. In terms of processing, acylated. Acylation may be a prerequisite for conversion of the monomeric 37 kDa laminin receptor precursor (37LRP) to the mature dimeric 67 kDa laminin receptor (67LR), and may provide a mechanism for membrane association. Cleaved by stromelysin-3 (ST3) at the cell surface. Cleavage by stromelysin-3 may be a mechanism to alter cell-extracellular matrix interactions.

Its subcellular location is the cell membrane. The protein resides in the cytoplasm. It localises to the nucleus. In terms of biological role, required for the assembly and/or stability of the 40S ribosomal subunit. Required for the processing of the 20S rRNA-precursor to mature 18S rRNA in a late step of the maturation of 40S ribosomal subunits. Also functions as a cell surface receptor for laminin. Plays a role in cell adhesion to the basement membrane and in the consequent activation of signaling transduction pathways. May play a role in cell fate determination and tissue morphogenesis. Also acts as a receptor for several other ligands, including the pathogenic prion protein, viruses, and bacteria. Acts as a PPP1R16B-dependent substrate of PPP1CA. In Oryctolagus cuniculus (Rabbit), this protein is Small ribosomal subunit protein uS2.